The chain runs to 324 residues: Uroporphyrinogen decarboxylase (324 aa).

Substrate-binding positions include 14 to 18, Phe32, Asp63, Tyr136, Ser191, and His302; that span reads RQAGR.

The protein belongs to the uroporphyrinogen decarboxylase family. As to quaternary structure, homodimer.

The protein localises to the cytoplasm. The enzyme catalyses uroporphyrinogen III + 4 H(+) = coproporphyrinogen III + 4 CO2. It participates in porphyrin-containing compound metabolism; protoporphyrin-IX biosynthesis; coproporphyrinogen-III from 5-aminolevulinate: step 4/4. Catalyzes the decarboxylation of four acetate groups of uroporphyrinogen-III to yield coproporphyrinogen-III. The chain is Uroporphyrinogen decarboxylase from Neorickettsia sennetsu (strain ATCC VR-367 / Miyayama) (Ehrlichia sennetsu).